The primary structure comprises 309 residues: MKEEEKTRLVIVQGPTASGKSALALELAERIGGEIVNADSMQVYRGMDIGTAKPSQEERRRVPHHLYDIVDPKVNFTAADFREHASRAIADIERRGKRVILVGGTGLYIRILTQGLVASPGGDDNIRRELEDQAHGEGLESLHRRLAAVDPVAAARLHPNDGVRIVRALEVFLLTGRPLSAFQEAHRFADEPYRCLKLGITVERELLYRRVEERVDRMIAEGLVEEVRGLLSAGYPATLKAMGSIGYREICAHLAGEFSLDEAMRLIKQNTRQYAKRQMTWFRRDSEIIWVEYPGKFDSILSTVMGFYH.

Residue 14 to 21 (GPTASGKS) coordinates ATP. 16 to 21 (TASGKS) provides a ligand contact to substrate. The tract at residues 39–42 (DSMQ) is interaction with substrate tRNA.

Belongs to the IPP transferase family. As to quaternary structure, monomer. It depends on Mg(2+) as a cofactor.

It carries out the reaction adenosine(37) in tRNA + dimethylallyl diphosphate = N(6)-dimethylallyladenosine(37) in tRNA + diphosphate. Its function is as follows. Catalyzes the transfer of a dimethylallyl group onto the adenine at position 37 in tRNAs that read codons beginning with uridine, leading to the formation of N6-(dimethylallyl)adenosine (i(6)A). The protein is tRNA dimethylallyltransferase of Geobacter metallireducens (strain ATCC 53774 / DSM 7210 / GS-15).